We begin with the raw amino-acid sequence, 470 residues long: Probable tocopherol cyclase, chloroplastic (470 aa).

A chloroplast-targeting transit peptide spans 1–61 (MDLAAAAVAV…APTPRDRALR (61 aa)). The disordered stretch occupies residues 14–48 (RPAPPPRRCAPRRHRRALAPRAASSSPSPSTAVAA). A compositionally biased stretch (basic residues) spans 22–31 (CAPRRHRRAL). Residues 32-48 (APRAASSSPSPSTAVAA) show a composition bias toward low complexity.

Expressed in the roots, stems, leaves and spikelets.

The protein localises to the plastid. Its subcellular location is the chloroplast. It is found in the plastoglobule. Its pathway is cofactor biosynthesis; tocopherol biosynthesis. In terms of biological role, involved in the synthesis of both tocopherols and tocotrienols (vitamin E), which presumably protect photosynthetic complexes from oxidative stress. Catalyzes the conversion of 2-methyl-6-phytyl-1,4-hydroquinone and 2,3-dimethyl-5-phytyl-1,4-hydroquinone (DMPQ) to delta- and gamma-tocopherol respectively. Also converts 2,3-dimethyl-5-geranylgeranyl-1,4-hydroquinone (DMGQ) to gamma-tocotrienol. This Oryza sativa subsp. japonica (Rice) protein is Probable tocopherol cyclase, chloroplastic (VTE1).